The sequence spans 476 residues: Aspartyl/glutamyl-tRNA(Asn/Gln) amidotransferase subunit B (476 aa).

This sequence belongs to the GatB/GatE family. GatB subfamily. In terms of assembly, heterotrimer of A, B and C subunits.

The enzyme catalyses L-glutamyl-tRNA(Gln) + L-glutamine + ATP + H2O = L-glutaminyl-tRNA(Gln) + L-glutamate + ADP + phosphate + H(+). The catalysed reaction is L-aspartyl-tRNA(Asn) + L-glutamine + ATP + H2O = L-asparaginyl-tRNA(Asn) + L-glutamate + ADP + phosphate + 2 H(+). Functionally, allows the formation of correctly charged Asn-tRNA(Asn) or Gln-tRNA(Gln) through the transamidation of misacylated Asp-tRNA(Asn) or Glu-tRNA(Gln) in organisms which lack either or both of asparaginyl-tRNA or glutaminyl-tRNA synthetases. The reaction takes place in the presence of glutamine and ATP through an activated phospho-Asp-tRNA(Asn) or phospho-Glu-tRNA(Gln). This Latilactobacillus sakei subsp. sakei (strain 23K) (Lactobacillus sakei subsp. sakei) protein is Aspartyl/glutamyl-tRNA(Asn/Gln) amidotransferase subunit B.